A 91-amino-acid polypeptide reads, in one-letter code: Gas vesicle protein K (91 aa).

It belongs to the gas vesicle GvpK family.

It localises to the gas vesicle. In terms of biological role, might be involved in nucleating gas vesicle formation. Gas vesicles are hollow, gas filled proteinaceous nanostructures found in some microorganisms. It is not clear what function gas vesicles perform in soil bacteria. The protein is Gas vesicle protein K of Streptomyces sp. (strain CB03234).